The sequence spans 264 residues: 5'-nucleotidase SurE (264 aa).

A divalent metal cation-binding residues include Asp-10, Asp-11, Ser-43, and Asn-99.

It belongs to the SurE nucleotidase family. A divalent metal cation serves as cofactor.

The protein resides in the cytoplasm. The enzyme catalyses a ribonucleoside 5'-phosphate + H2O = a ribonucleoside + phosphate. Functionally, nucleotidase that shows phosphatase activity on nucleoside 5'-monophosphates. The chain is 5'-nucleotidase SurE from Methanococcus maripaludis (strain C7 / ATCC BAA-1331).